Consider the following 181-residue polypeptide: Lysozyme B (181 aa).

Residues 1–19 (MRISFFLLILAVIIGYAYG) form the signal peptide. The propeptide occupies 139–181 (LTDSRPLGPFNVTEEEKAQLFIDHEIAMAQCEAEKTCNGFDLE).

This sequence belongs to the dictyostelium lysozyme family. In terms of processing, contains six disulfide bonds.

Its subcellular location is the cytoplasmic vesicle lumen. It carries out the reaction Hydrolysis of (1-&gt;4)-beta-linkages between N-acetylmuramic acid and N-acetyl-D-glucosamine residues in a peptidoglycan and between N-acetyl-D-glucosamine residues in chitodextrins.. Has antibacterial activity. In Dictyostelium discoideum (Social amoeba), this protein is Lysozyme B (alyB).